A 552-amino-acid polypeptide reads, in one-letter code: HTH-type transcriptional regulator SgrR (552 aa).

The solute-binding stretch occupies residues 163 to 493 (ELKPDLAHHW…DDLDTDAQQW (331 aa)).

In terms of biological role, activates the small RNA gene sgrS under glucose-phosphate stress conditions as well as yfdZ. Represses its own transcription under both stress and non-stress conditions. Might act as a sensor of the intracellular accumulation of phosphoglucose by binding these molecules in its C-terminal solute-binding domain. The protein is HTH-type transcriptional regulator SgrR of Pectobacterium atrosepticum (strain SCRI 1043 / ATCC BAA-672) (Erwinia carotovora subsp. atroseptica).